Consider the following 120-residue polypeptide: MKVSVAALSCLMLVTALGSQAQVTNDAETGFMMSKLSLANSEVLDSFHAINADCCTSYIPGSIPCSLLESYLETSSKCPKPGVIFLTKNGRRLCVSPSNKQVLACRIMLKLATRIKTRKN.

The first 21 residues, 1 to 21 (MKVSVAALSCLMLVTALGSQA), serve as a signal peptide directing secretion. Cystine bridges form between Cys54-Cys78, Cys55-Cys94, and Cys65-Cys105.

The protein belongs to the intercrine beta (chemokine CC) family.

The protein resides in the secreted. Shows chemotactic activity for monocytes, resting T-lymphocytes, and neutrophils, but not for activated lymphocytes. Inhibits proliferation of myeloid progenitor cells in colony formation assays. This protein can bind heparin. Binds CCR1. The chain is C-C motif chemokine 23 (CCL23) from Macaca mulatta (Rhesus macaque).